Reading from the N-terminus, the 578-residue chain is Aspartate--tRNA ligase (578 aa).

E169 contacts L-aspartate. The aspartate stretch occupies residues 191–194 (QTFK). R213 contacts L-aspartate. Residues 213–215 (RDE) and Q222 each bind ATP. H440 provides a ligand contact to L-aspartate. E474 lines the ATP pocket. An L-aspartate-binding site is contributed by R481. 526–529 (GLDR) contributes to the ATP binding site.

The protein belongs to the class-II aminoacyl-tRNA synthetase family. Type 1 subfamily. Homodimer.

It is found in the cytoplasm. The enzyme catalyses tRNA(Asp) + L-aspartate + ATP = L-aspartyl-tRNA(Asp) + AMP + diphosphate. Functionally, catalyzes the attachment of L-aspartate to tRNA(Asp) in a two-step reaction: L-aspartate is first activated by ATP to form Asp-AMP and then transferred to the acceptor end of tRNA(Asp). In Ureaplasma parvum serovar 3 (strain ATCC 700970), this protein is Aspartate--tRNA ligase.